The chain runs to 482 residues: uncharacterized protein (482 aa).

The DWNN domain maps to 5-79; the sequence is IYYKFKSQKD…STSVIVRRVP (75 aa). Residues 86–108 are disordered; that stretch reads GTAARYVSGAPKTTGARSDSVKR. Residues 183–200 form a CCHC-type zinc finger; it reads YICYRCGQKGHWIQACPT. The RING-type; degenerate zinc finger occupies 282-322; that stretch reads CTLCKKLARNACRTPCCDKLFCEECIQTALLDSDFECPNCH. Disordered regions lie at residues 346-393 and 447-482; these read KSVL…SSAV and QVYH…TKTN. Positions 451 to 466 are enriched in low complexity; the sequence is NNRNPPRTNSRPSNAS.

It is found in the nucleus. This is an uncharacterized protein from Schizosaccharomyces pombe (strain 972 / ATCC 24843) (Fission yeast).